The primary structure comprises 115 residues: C-type natriuretic peptide prohormone (115 aa).

Residues 24-49 (PSDELNNEAEEMSPAASLPELNADQS) form a disordered region. Residues C99 and C115 are joined by a disulfide bond.

This sequence belongs to the natriuretic peptide family. As to expression, CNP-115 is differentially processed to produce CNP-38 and CNP-39 in the heart and CNP-22 in the brain.

It is found in the secreted. Functionally, hormone which may be vasoactive and natriuretic. Has a cGMP-stimulating activity. The chain is C-type natriuretic peptide prohormone from Scyliorhinus canicula (Small-spotted catshark).